Here is a 509-residue protein sequence, read N- to C-terminus: Citrate synthase 3, peroxisomal (509 aa).

Catalysis depends on residues H319, H358, and D414. The tract at residues 485–509 (SKESDKLGQVATSNASRRRLAGSSV) is disordered. Over residues 500-509 (SRRRLAGSSV) the composition is skewed to basic residues.

The protein belongs to the citrate synthase family. As to expression, widely expressed. Expressed throughout the shoot. Expressed in flower, silique, stem, cauline leaf, young leaf, mature leaf and senescent leaf.

It localises to the peroxisome. The catalysed reaction is oxaloacetate + acetyl-CoA + H2O = citrate + CoA + H(+). Its pathway is carbohydrate metabolism; tricarboxylic acid cycle; isocitrate from oxaloacetate: step 1/2. In terms of biological role, peroxisomal citrate synthase required for the fatty acid respiration in seedlings, citrate being exported from peroxisomes into mitochondria during respiration of triacylglycerol (TAG). Indeed, complete respiration requires the transfer of carbon in the form of citrate from the peroxisome to the mitochondria. This chain is Citrate synthase 3, peroxisomal (CSY3), found in Arabidopsis thaliana (Mouse-ear cress).